We begin with the raw amino-acid sequence, 188 residues long: uncharacterized protein (188 aa).

The next 3 helical transmembrane spans lie at 6-26 (MIVF…SLPL), 43-63 (FAGR…ILFA), and 110-130 (ALFL…MIAA).

It is found in the membrane. This is an uncharacterized protein from Schizosaccharomyces pombe (strain 972 / ATCC 24843) (Fission yeast).